The following is a 424-amino-acid chain: Spermatogenesis-associated protein 2-like protein (424 aa).

Disordered stretches follow at residues 233 to 258 (EDEG…AELA) and 273 to 300 (TGGR…EEGL). A Phosphoserine modification is found at serine 327.

It belongs to the SPATA2 family.

This Homo sapiens (Human) protein is Spermatogenesis-associated protein 2-like protein.